A 122-amino-acid polypeptide reads, in one-letter code: Large ribosomal subunit protein bL17 (122 aa).

It belongs to the bacterial ribosomal protein bL17 family. Part of the 50S ribosomal subunit. Contacts protein L32.

This is Large ribosomal subunit protein bL17 from Neisseria meningitidis serogroup C / serotype 2a (strain ATCC 700532 / DSM 15464 / FAM18).